Consider the following 446-residue polypeptide: ATP-dependent RNA helicase SUB2 (446 aa).

S2 carries the post-translational modification N-acetylserine. A phosphoserine mark is found at S13 and S37. Low complexity predominate over residues 23 to 41 (ASKAAEAGETGAATSATEG). Residues 23–52 (ASKAAEAGETGAATSATEGDNNNNTAAGDK) are disordered. Residues 62–90 (TGFKDFLLKPELSRAIIDCGFEHPSEVQQ) carry the Q motif motif. Positions 93–268 (IPQSIHGTDV…RRFLQNPLEI (176 aa)) constitute a Helicase ATP-binding domain. Residue 106 to 113 (AKSGLGKT) coordinates ATP. A Phosphothreonine modification is found at T169. Positions 215 to 218 (DECD) match the DECD box motif. Residues 280-441 (GLQQYYIKLE…EFPEEGIDPS (162 aa)) form the Helicase C-terminal domain.

It belongs to the DEAD box helicase family. DECD subfamily. In terms of assembly, component of the TREX complex composed of at least SUB2, TEX1, YRA1 and the four THO complex components: HPR1, MFT1, THO2 and THP1. Interacts with HPR1, YRA1, and YRA2. SUB2 may mediate the interaction between the THO complex and YRA1. Associates with growing mRNP complexes during transcription. This association requires the presence of HPR1. Also interacts with SAC3. Interacts with THO1 in the presence of RNA; this interaction facilitates RNA binding of SUB2.

The protein localises to the nucleus. The catalysed reaction is ATP + H2O = ADP + phosphate + H(+). Its function is as follows. ATP-binding RNA helicase component of the TREX complex involved in transcription elongation and required for the export of mRNA out of the nucleus. SUB2 also plays a role in pre-mRNA splicing and spliceosome assembly. May be involved in rDNA and telomeric silencing, and maintenance of genome integrity. Associates with THO1, which facilitates RNA binding of SUB2 and likely plays a role in mRNA export. The sequence is that of ATP-dependent RNA helicase SUB2 (SUB2) from Saccharomyces cerevisiae (strain ATCC 204508 / S288c) (Baker's yeast).